The sequence spans 256 residues: Non-structural protein 1 (256 aa).

It localises to the host cytoplasm. The protein resides in the host perinuclear region. Its function is as follows. Plays a role in inhibition of the host innate immune system by counteracting the type I interferon signaling. The protein is Non-structural protein 1 of Infectious salmon anemia virus (isolate Atlantic salmon/Norway/810/9/99) (ISAV).